The following is a 160-amino-acid chain: Ribonuclease P protein component 2 (160 aa).

The protein belongs to the eukaryotic/archaeal RNase P protein component 2 family. Consists of a catalytic RNA component and at least 4-5 protein subunits.

It localises to the cytoplasm. It carries out the reaction Endonucleolytic cleavage of RNA, removing 5'-extranucleotides from tRNA precursor.. In terms of biological role, part of ribonuclease P, a protein complex that generates mature tRNA molecules by cleaving their 5'-ends. This chain is Ribonuclease P protein component 2, found in Methanoculleus marisnigri (strain ATCC 35101 / DSM 1498 / JR1).